Here is a 241-residue protein sequence, read N- to C-terminus: Putative inactive serine protease 58 (241 aa).

The N-terminal stretch at 1-17 (MKLAFLCILSTLLRTFA) is a signal peptide. In terms of domain architecture, Peptidase S1 spans 18–239 (YNPDHIAGTT…YLPWIEDTMK (222 aa)). Cysteine 41 and cysteine 57 are oxidised to a cystine. Residues histidine 56 and aspartate 101 each act as charge relay system in the active site. Cystine bridges form between cysteine 133-cysteine 201, cysteine 165-cysteine 180, and cysteine 191-cysteine 215. Asparagine 156 is a glycosylation site (N-linked (GlcNAc...) asparagine).

Belongs to the peptidase S1 family.

Its subcellular location is the secreted. The enzyme catalyses Preferential cleavage: Arg-|-Xaa, Lys-|-Xaa.. The polypeptide is Putative inactive serine protease 58 (Prss58) (Mus musculus (Mouse)).